A 67-amino-acid chain; its full sequence is Protein AaeX (67 aa).

2 helical membrane passes run 8-28 and 47-67; these read VLFGLSFPPAFFALLAALPLF and PALFNCALYGCLFYLVSWLFI.

The protein belongs to the AaeX family.

It localises to the cell membrane. This Edwardsiella piscicida protein is Protein AaeX.